Here is a 420-residue protein sequence, read N- to C-terminus: MKKINILVPDLPESISDATVVKWHKKIGDTVHCDDNIVDIETDKVMLEVSSPCDGILQSILEKEGKVVISQQTLGEINKSTVVDNHLSNNHIIEKEDNLLKKEEKYITTEEKKEIEYLLKDNHKHLTPSMRRSVKIHNINNGFLNQVIETSKKTNFENIIKEEKKESNQILFNHNIFNANENNKNNNNKVTNRVKMTRLRQRIAERLLDSKNNTAMLTTFHEVNMKPIILLRKKYGEDFEKKHNVRIGFMSFFVKAVIQALKNFPEINAYIDQTDIVFYKNFDISIAISTPRGLITPVIRNADTMTMAEIEKKIKDFSIKGLQNKINIKELMGGNFTITNGGVFGSLMSTPIINPPQTAILGMHVIQERPVVVNGQIKILPMMYLALSYDHRLIDGKESVGFLINIKNILEDFNRIAIDV.

One can recognise a Lipoyl-binding domain in the interval 3 to 78; sequence KINILVPDLP…ISQQTLGEIN (76 aa). The residue at position 44 (lysine 44) is an N6-lipoyllysine. Active-site residues include histidine 391 and aspartate 395.

This sequence belongs to the 2-oxoacid dehydrogenase family. In terms of assembly, forms a 24-polypeptide structural core with octahedral symmetry. Part of the 2-oxoglutarate dehydrogenase (OGDH) complex composed of E1 (2-oxoglutarate dehydrogenase), E2 (dihydrolipoamide succinyltransferase) and E3 (dihydrolipoamide dehydrogenase); the complex contains multiple copies of the three enzymatic components (E1, E2 and E3). Requires (R)-lipoate as cofactor.

It catalyses the reaction N(6)-[(R)-dihydrolipoyl]-L-lysyl-[protein] + succinyl-CoA = N(6)-[(R)-S(8)-succinyldihydrolipoyl]-L-lysyl-[protein] + CoA. It functions in the pathway amino-acid degradation; L-lysine degradation via saccharopine pathway; glutaryl-CoA from L-lysine: step 6/6. Functionally, E2 component of the 2-oxoglutarate dehydrogenase (OGDH) complex which catalyzes the second step in the conversion of 2-oxoglutarate to succinyl-CoA and CO(2). The protein is Dihydrolipoyllysine-residue succinyltransferase component of 2-oxoglutarate dehydrogenase complex (sucB) of Buchnera aphidicola subsp. Acyrthosiphon pisum (strain APS) (Acyrthosiphon pisum symbiotic bacterium).